The chain runs to 213 residues: Adenylate kinase (213 aa).

10–15 (GSGKGS) is a binding site for ATP. The segment at 30-60 (STGNLFRAILKEDSELARKIKEINVSGGKLV) is NMP. AMP contacts are provided by residues threonine 31, arginine 36, 58-60 (KLV), 87-90 (GYPR), and glutamine 94. The LID stretch occupies residues 123–160 (GRWMCPKCAGIYNIHFKKPQVDGVCDNDQATLYQRADD). An ATP-binding site is contributed by arginine 124. Zn(2+) is bound by residues cysteine 127 and cysteine 130. 133–134 (IY) contributes to the ATP binding site. Zn(2+)-binding residues include cysteine 147 and aspartate 150. 2 residues coordinate AMP: arginine 157 and arginine 168. ATP is bound at residue glutamine 196.

The protein belongs to the adenylate kinase family. Monomer.

The protein localises to the cytoplasm. The catalysed reaction is AMP + ATP = 2 ADP. It functions in the pathway purine metabolism; AMP biosynthesis via salvage pathway; AMP from ADP: step 1/1. In terms of biological role, catalyzes the reversible transfer of the terminal phosphate group between ATP and AMP. Plays an important role in cellular energy homeostasis and in adenine nucleotide metabolism. The polypeptide is Adenylate kinase (Ureaplasma urealyticum serovar 10 (strain ATCC 33699 / Western)).